Consider the following 354-residue polypeptide: Hydrophobic dipeptide epimerase (354 aa).

Residues threonine 134, lysine 159, and 159–161 contribute to the substrate site; that span reads KIK. Residue aspartate 189 participates in Mg(2+) binding. Asparagine 191 contacts substrate. Mg(2+)-binding residues include glutamate 215 and aspartate 240. Substrate contacts are provided by residues lysine 264, 292–295, and 318–320; these read CMAE and DLD.

This sequence belongs to the mandelate racemase/muconate lactonizing enzyme family. The cofactor is Mg(2+).

Its function is as follows. Catalyzes the epimerization of L-Ile-L-Tyr to L-Ile-D-Tyr (in vitro). Catalyzes the epimerization of dipeptides, with a preference for substrates with a hydrophobic or basic amino acid in the first position, followed by an aromatic residue in the second position. Has epimerase activity with L-Ile-L-Tyr, L-Val-L-Tyr and L-Arg-L-Tyr (in vitro). The sequence is that of Hydrophobic dipeptide epimerase from Enterococcus faecalis (strain ATCC 700802 / V583).